The sequence spans 66 residues: U-scoloptoxin(24)-Er2a (66 aa).

An N-terminal signal peptide occupies residues 1–23 (MVKPLHCLIGIVLFLAVLNAGNG). Residues 43–66 (SLFHGNQRKKRSEEKRFSDMEQTK) form a disordered region. Basic and acidic residues predominate over residues 53-66 (RSEEKRFSDMEQTK).

The protein belongs to the scoloptoxin-24 family. In terms of tissue distribution, expressed by the venom gland.

Its subcellular location is the secreted. The protein is U-scoloptoxin(24)-Er2a of Ethmostigmus rubripes (Giant centipede).